Consider the following 462-residue polypeptide: Kinetochore protein nsk1 (462 aa).

Over residues 104–120 (PSKNHETSLSPSKSTID) the composition is skewed to polar residues. 3 disordered regions span residues 104–161 (PSKN…CPGI), 180–240 (EKYG…PLRT), and 320–462 (NQLF…NIQS). Residues 121–138 (NNERKLDNEIDNYKHDVK) are compositionally biased toward basic and acidic residues. Over residues 146–156 (GKTSNPSQGTT) the composition is skewed to polar residues. The span at 180-189 (EKYGKTDLGK) shows a compositional bias: basic and acidic residues. A compositionally biased stretch (polar residues) spans 229 to 240 (KNRSSTFSPLRT). The segment covering 324–333 (KSEEEKDPVG) has biased composition (basic and acidic residues). Positions 422 to 444 (WPQNLAKNNINSEPNTPTKSNID) are enriched in polar residues. The span at 449–462 (HSARAHKTRKNIQS) shows a compositional bias: basic residues.

In terms of assembly, interacts with dlc1. The dlc1-nsk1 complex seems to oligomerize in chain-like structures. Also binds directly to spindle microtubules. Phosphorylated by cdk1 at prometaphase arrest. Phosphorylation prevents nsk1 kinetochore and spindle targeting. Dephosphorylated by clp1 at anaphase onset controls its relocalization.

The protein localises to the nucleus. It is found in the nucleolus. The protein resides in the cytoplasm. Its subcellular location is the cytoskeleton. It localises to the spindle. The protein localises to the chromosome. It is found in the centromere. The protein resides in the kinetochore. Its function is as follows. Ensures chromosome alignment and accurate chromosome segregation during mitosis. Promotes proper kinetochore-microtubule (k-MT) interactions during anaphase B. The phosphorylation status of nsk1 affects the proper k-MT coupling, ensuring that it interacts stably only at the correct time during mitosis. The polypeptide is Kinetochore protein nsk1 (nsk1) (Schizosaccharomyces pombe (strain 972 / ATCC 24843) (Fission yeast)).